The sequence spans 239 residues: Tetratricopeptide repeat protein 9B (239 aa).

The tract at residues 1-54 (MQRGALSPVLMLSAAPEPPPRPPPALSPPGPGSAPRHGSARSGPAPEPSGGLAA) is disordered. Phosphoserine is present on residues Ser7 and Ser27. The segment covering 16-32 (PEPPPRPPPALSPPGPG) has biased composition (pro residues). One copy of the TPR 1 repeat lies at 63–97 (AVAFKAEGQRCYREKKFREAIGKYHRALLQLKAAQ). The disordered stretch occupies residues 98–121 (GARPGGLPTPSPGPTTSPGPARLS). Positions 104–114 (LPTPSPGPTTS) are enriched in pro residues. The TPR 2 repeat unit spans residues 169–202 (FKATYRAGIAFYHLGDYARALRYLQEARSREPTD).

This sequence belongs to the TTC9 family.

In Mus musculus (Mouse), this protein is Tetratricopeptide repeat protein 9B (Ttc9b).